A 363-amino-acid chain; its full sequence is S-adenosylmethionine:tRNA ribosyltransferase-isomerase (363 aa).

This sequence belongs to the QueA family. As to quaternary structure, monomer.

Its subcellular location is the cytoplasm. The catalysed reaction is 7-aminomethyl-7-carbaguanosine(34) in tRNA + S-adenosyl-L-methionine = epoxyqueuosine(34) in tRNA + adenine + L-methionine + 2 H(+). It functions in the pathway tRNA modification; tRNA-queuosine biosynthesis. In terms of biological role, transfers and isomerizes the ribose moiety from AdoMet to the 7-aminomethyl group of 7-deazaguanine (preQ1-tRNA) to give epoxyqueuosine (oQ-tRNA). This is S-adenosylmethionine:tRNA ribosyltransferase-isomerase from Haemophilus influenzae (strain PittEE).